The primary structure comprises 295 residues: MKAVIPVAGLGTRMLPATKAIPKEMLTLVDKPLIQYVVNECVAAGIKEIVLVTHSSKNAIENHFDTSFELETMLEKRVKRQLLEEVRSICPKNVTIMHVRQGNAKGLGHAVLCGRPLVGNESFAVMLPDVLLAEFSADQKKENLAAMIQRFNETGASQIMVTPVPQENVSSYGVADCGGIELNGGESAKINSIVEKPSIEDAPSNLAVVGRYVFSAAIWDLLEKTPIGVGDEIQLTDAIDMLIEKETVEAFHMTGETFDCGDKIGYMEAFVEYGIRHEKLGKEFKSFIKNLAKTL.

Belongs to the UDPGP type 2 family.

It carries out the reaction alpha-D-glucose 1-phosphate + UTP + H(+) = UDP-alpha-D-glucose + diphosphate. May play a role in stationary phase survival. This is UTP--glucose-1-phosphate uridylyltransferase (galU) from Haemophilus influenzae (strain ATCC 51907 / DSM 11121 / KW20 / Rd).